Here is a 95-residue protein sequence, read N- to C-terminus: Small ribosomal subunit protein bS18 (95 aa).

Belongs to the bacterial ribosomal protein bS18 family. As to quaternary structure, part of the 30S ribosomal subunit. Forms a tight heterodimer with protein bS6.

Its function is as follows. Binds as a heterodimer with protein bS6 to the central domain of the 16S rRNA, where it helps stabilize the platform of the 30S subunit. The protein is Small ribosomal subunit protein bS18 of Rickettsia typhi (strain ATCC VR-144 / Wilmington).